Here is a 363-residue protein sequence, read N- to C-terminus: Neutral protease 2 homolog NFIA_102630 (363 aa).

A signal peptide spans 1–19 (MKVTVLASAILALINGALA). A propeptide spanning residues 20–172 (LPANAPTLDV…PQAIKLLDRR (153 aa)) is cleaved from the precursor. Cystine bridges form between Cys-178–Cys-250 and Cys-257–Cys-275. Position 300 (His-300) interacts with Zn(2+). Glu-301 is an active-site residue. Zn(2+)-binding residues include His-304 and Asp-315.

The protein belongs to the peptidase M35 family. Zn(2+) is required as a cofactor.

It is found in the secreted. It catalyses the reaction Preferential cleavage of bonds with hydrophobic residues in P1'. Also 3-Asn-|-Gln-4 and 8-Gly-|-Ser-9 bonds in insulin B chain.. Its function is as follows. Secreted metalloproteinase that allows assimilation of proteinaceous substrates. Shows high activities on basic nuclear substrates such as histone and protamine. In Neosartorya fischeri (strain ATCC 1020 / DSM 3700 / CBS 544.65 / FGSC A1164 / JCM 1740 / NRRL 181 / WB 181) (Aspergillus fischerianus), this protein is Neutral protease 2 homolog NFIA_102630.